The chain runs to 586 residues: 25S rRNA (adenine-N(1))-methyltransferase (586 aa).

Disordered regions lie at residues 23-229 (GTAP…LTPL) and 536-573 (GKCV…EVKD). A compositionally biased stretch (low complexity) spans 25-41 (APAAPAPASAPAVSSSK). The span at 65–83 (LWEKVIEQKKEGVADGVKK) shows a compositional bias: basic and acidic residues. Residues 99–108 (KLSNSNNDGN) are compositionally biased toward polar residues. Positions 114 to 123 (NNKKKNKNKN) are enriched in basic residues. A compositionally biased stretch (acidic residues) spans 144 to 163 (GEEDEDDNNDDADEWEGIDE). Basic and acidic residues predominate over residues 164-182 (DEKHASSEKPTPKKDDKKQ). Low complexity predominate over residues 183-192 (QQLQQQQQQK). A compositionally biased stretch (polar residues) spans 204–213 (NGTTSNWQQD). Over residues 217 to 229 (PKTATPAPKLTPL) the composition is skewed to low complexity. Basic and acidic residues predominate over residues 539-549 (VPKDGQEDTTK). Basic residues predominate over residues 550–559 (NKKGGQKPKP).

The protein belongs to the methyltransferase superfamily. RRP8 family.

The protein resides in the nucleus. It is found in the nucleolus. Functionally, S-adenosyl-L-methionine-dependent methyltransferase that specifically methylates the N(1) position of a conserved adenine in helix 25.1 in 25S rRNA. Required both for ribosomal 40S and 60S subunits biogenesis. Required for efficient pre-rRNA cleavage at site A2. The polypeptide is 25S rRNA (adenine-N(1))-methyltransferase (RPR8) (Chaetomium thermophilum (strain DSM 1495 / CBS 144.50 / IMI 039719) (Thermochaetoides thermophila)).